Consider the following 565-residue polypeptide: CTP synthase (565 aa).

The segment at Met1 to Ile272 is amidoligase domain. Residue Ser18 coordinates CTP. Ser18 is a UTP binding site. ATP is bound at residue Ser19 to Ile24. Residue Tyr59 coordinates L-glutamine. Asp76 provides a ligand contact to ATP. Residues Asp76 and Glu146 each coordinate Mg(2+). CTP-binding positions include Asp153–Glu155, Lys193–Gln198, and Lys229. UTP contacts are provided by residues Lys193 to Gln198 and Lys229. In terms of domain architecture, Glutamine amidotransferase type-1 spans Thr299–Gly543. Gly363 is a binding site for L-glutamine. Residue Cys390 is the Nucleophile; for glutamine hydrolysis of the active site. Residues Leu391–Gln394, Glu414, and Arg471 each bind L-glutamine. Catalysis depends on residues His516 and Glu518.

The protein belongs to the CTP synthase family. In terms of assembly, homotetramer.

It catalyses the reaction UTP + L-glutamine + ATP + H2O = CTP + L-glutamate + ADP + phosphate + 2 H(+). The enzyme catalyses L-glutamine + H2O = L-glutamate + NH4(+). The catalysed reaction is UTP + NH4(+) + ATP = CTP + ADP + phosphate + 2 H(+). The protein operates within pyrimidine metabolism; CTP biosynthesis via de novo pathway; CTP from UDP: step 2/2. Allosterically activated by GTP, when glutamine is the substrate; GTP has no effect on the reaction when ammonia is the substrate. The allosteric effector GTP functions by stabilizing the protein conformation that binds the tetrahedral intermediate(s) formed during glutamine hydrolysis. Inhibited by the product CTP, via allosteric rather than competitive inhibition. Functionally, catalyzes the ATP-dependent amination of UTP to CTP with either L-glutamine or ammonia as the source of nitrogen. Regulates intracellular CTP levels through interactions with the four ribonucleotide triphosphates. The sequence is that of CTP synthase from Chlorobium phaeobacteroides (strain BS1).